Reading from the N-terminus, the 190-residue chain is Elongation factor P-like protein (190 aa).

This sequence belongs to the elongation factor P family.

The polypeptide is Elongation factor P-like protein (Pseudoalteromonas translucida (strain TAC 125)).